We begin with the raw amino-acid sequence, 366 residues long: Flagellar P-ring protein (366 aa).

The N-terminal stretch at 1-24 is a signal peptide; the sequence is MWPLLLAVALSTLLPLAMPGSAGA.

It belongs to the FlgI family. As to quaternary structure, the basal body constitutes a major portion of the flagellar organelle and consists of four rings (L,P,S, and M) mounted on a central rod.

It is found in the periplasm. The protein localises to the bacterial flagellum basal body. In terms of biological role, assembles around the rod to form the L-ring and probably protects the motor/basal body from shearing forces during rotation. This Nitratidesulfovibrio vulgaris (strain ATCC 29579 / DSM 644 / CCUG 34227 / NCIMB 8303 / VKM B-1760 / Hildenborough) (Desulfovibrio vulgaris) protein is Flagellar P-ring protein.